The following is a 365-amino-acid chain: Class I histocompatibility antigen, Gogo-A*0401 alpha chain (365 aa).

The N-terminal stretch at 1–24 (MAVMAPRTLVLLLSGALALTQTWA) is a signal peptide. The segment at 25 to 114 (GSHSMRYFYT…LRGYYNQSED (90 aa)) is alpha-1. Residues 25-308 (GSHSMRYFYT…EPSSQPTIPI (284 aa)) are Extracellular-facing. N110 carries N-linked (GlcNAc...) asparagine glycosylation. Positions 115–206 (GSHTIQRMYG…ENGKETLQLT (92 aa)) are alpha-2. Intrachain disulfides connect C125/C188 and C227/C283. The segment at 207–298 (DAPKTHMTHH…GLPKPLTLRW (92 aa)) is alpha-3. An Ig-like C1-type domain is found at 209–295 (PKTHMTHHPV…QHEGLPKPLT (87 aa)). The connecting peptide stretch occupies residues 299–308 (EPSSQPTIPI). Residues 309–332 (VGIIAGLVLFGAVIAGAVVAAVRW) form a helical membrane-spanning segment. Residues 333-365 (RRKSSDRKGGSYSQAASSDSAQGSDVSLTACKV) are Cytoplasmic-facing. A disordered region spans residues 338 to 365 (DRKGGSYSQAASSDSAQGSDVSLTACKV). Residues 342 to 359 (GSYSQAASSDSAQGSDVS) are compositionally biased toward low complexity. At S343 the chain carries Phosphoserine. Y344 is modified (phosphotyrosine). S345, S349, S350, S352, S356, and S359 each carry phosphoserine.

The protein belongs to the MHC class I family. Heterodimer of an alpha chain and a beta chain (beta-2-microglobulin).

It is found in the membrane. Functionally, involved in the presentation of foreign antigens to the immune system. The protein is Class I histocompatibility antigen, Gogo-A*0401 alpha chain of Gorilla gorilla gorilla (Western lowland gorilla).